Reading from the N-terminus, the 143-residue chain is Transcriptional regulator MraZ (143 aa).

SpoVT-AbrB domains follow at residues 5–47 (THTP…PMQE) and 76–119 (ASSE…DLRT).

This sequence belongs to the MraZ family. As to quaternary structure, forms oligomers.

The protein localises to the cytoplasm. It is found in the nucleoid. The chain is Transcriptional regulator MraZ from Kineococcus radiotolerans (strain ATCC BAA-149 / DSM 14245 / SRS30216).